Here is a 228-residue protein sequence, read N- to C-terminus: Cytochrome c oxidase subunit 2 (228 aa).

Topologically, residues 1-26 (MRTWSNFNLQNSASPLMEQIIFFHDH) are mitochondrial intermembrane. The chain crosses the membrane as a helical span at residues 27-48 (TLIILIMITILVGYIMINLFFN). Over 49–62 (KFINRFFLVGQMIE) the chain is Mitochondrial matrix. A helical transmembrane segment spans residues 63–82 (LIWTVLPAITLIFIALPSLR). Topologically, residues 83-228 (LLYLLDELNN…FINWINNYSY (146 aa)) are mitochondrial intermembrane. Residues histidine 161, cysteine 196, glutamate 198, cysteine 200, histidine 204, and methionine 207 each coordinate Cu cation. Position 198 (glutamate 198) interacts with Mg(2+).

This sequence belongs to the cytochrome c oxidase subunit 2 family. As to quaternary structure, component of the cytochrome c oxidase (complex IV, CIV), a multisubunit enzyme composed of a catalytic core of 3 subunits and several supernumerary subunits. The complex exists as a monomer or a dimer and forms supercomplexes (SCs) in the inner mitochondrial membrane with ubiquinol-cytochrome c oxidoreductase (cytochrome b-c1 complex, complex III, CIII). It depends on Cu cation as a cofactor.

It localises to the mitochondrion inner membrane. The catalysed reaction is 4 Fe(II)-[cytochrome c] + O2 + 8 H(+)(in) = 4 Fe(III)-[cytochrome c] + 2 H2O + 4 H(+)(out). In terms of biological role, component of the cytochrome c oxidase, the last enzyme in the mitochondrial electron transport chain which drives oxidative phosphorylation. The respiratory chain contains 3 multisubunit complexes succinate dehydrogenase (complex II, CII), ubiquinol-cytochrome c oxidoreductase (cytochrome b-c1 complex, complex III, CIII) and cytochrome c oxidase (complex IV, CIV), that cooperate to transfer electrons derived from NADH and succinate to molecular oxygen, creating an electrochemical gradient over the inner membrane that drives transmembrane transport and the ATP synthase. Cytochrome c oxidase is the component of the respiratory chain that catalyzes the reduction of oxygen to water. Electrons originating from reduced cytochrome c in the intermembrane space (IMS) are transferred via the dinuclear copper A center (CU(A)) of subunit 2 and heme A of subunit 1 to the active site in subunit 1, a binuclear center (BNC) formed by heme A3 and copper B (CU(B)). The BNC reduces molecular oxygen to 2 water molecules using 4 electrons from cytochrome c in the IMS and 4 protons from the mitochondrial matrix. The chain is Cytochrome c oxidase subunit 2 (COII) from Galleria mellonella (Greater wax moth).